The sequence spans 158 residues: SsrA-binding protein (158 aa).

The protein belongs to the SmpB family.

It localises to the cytoplasm. Functionally, required for rescue of stalled ribosomes mediated by trans-translation. Binds to transfer-messenger RNA (tmRNA), required for stable association of tmRNA with ribosomes. tmRNA and SmpB together mimic tRNA shape, replacing the anticodon stem-loop with SmpB. tmRNA is encoded by the ssrA gene; the 2 termini fold to resemble tRNA(Ala) and it encodes a 'tag peptide', a short internal open reading frame. During trans-translation Ala-aminoacylated tmRNA acts like a tRNA, entering the A-site of stalled ribosomes, displacing the stalled mRNA. The ribosome then switches to translate the ORF on the tmRNA; the nascent peptide is terminated with the 'tag peptide' encoded by the tmRNA and targeted for degradation. The ribosome is freed to recommence translation, which seems to be the essential function of trans-translation. In Caldanaerobacter subterraneus subsp. tengcongensis (strain DSM 15242 / JCM 11007 / NBRC 100824 / MB4) (Thermoanaerobacter tengcongensis), this protein is SsrA-binding protein.